The sequence spans 310 residues: 4-hydroxyproline epimerase (310 aa).

Catalysis depends on Cys88, which acts as the Proton acceptor. Substrate-binding positions include 89–90 (GH), His208, and Asp232. Catalysis depends on Cys236, which acts as the Proton donor. 237-238 (GT) provides a ligand contact to substrate.

The protein belongs to the proline racemase family. As to quaternary structure, homodimer.

It carries out the reaction trans-4-hydroxy-L-proline = cis-4-hydroxy-D-proline. Inhibited by iodoacetate, iodoacetamide and by high amounts (10 mM) of pyrrole-2-carboxylic acid (PYC). Not inhibited by PYC at 1 mM. Functionally, allows intracellular utilization of 4-hydroxyproline, one of the major constituents of host collagen, by converting 4-hydroxy-L-proline to 4-hydroxy-D-proline, which can be further metabolized by intracellular 4-hydroxy-D-proline oxidases. The chain is 4-hydroxyproline epimerase from Burkholderia pseudomallei (strain K96243).